Reading from the N-terminus, the 411-residue chain is Arginine deiminase (411 aa).

Residue cysteine 401 is the Amidino-cysteine intermediate of the active site.

The protein belongs to the arginine deiminase family.

The protein localises to the cytoplasm. It catalyses the reaction L-arginine + H2O = L-citrulline + NH4(+). It functions in the pathway amino-acid degradation; L-arginine degradation via ADI pathway; carbamoyl phosphate from L-arginine: step 1/2. This chain is Arginine deiminase, found in Staphylococcus haemolyticus (strain JCSC1435).